Consider the following 233-residue polypeptide: MKIGIIGAMEQEVALLRDRIDHSTLCQQAGCEIYMGQLHGVEVALVKSGIGKVSAALGTTLLLDHFKPELVINTGSAGGLAPSLKVGDIVVSHEVRYHDVDVTAFGYEPGQMAQCPASFNAAPSLVALAEESVDRLGMHAVRGLVVSGDAFINDADGLAHIRQTFPQAIAVEMEATAIAHVCHQFAVPFVVVRAISDVADQASHLSFDEFLTVAAQSSSRLVEEMVQALAGQR.

E12 acts as the Proton acceptor in catalysis. Substrate-binding positions include G78, I152, and M173–E174. Catalysis depends on D197, which acts as the Proton donor.

The protein belongs to the PNP/UDP phosphorylase family. MtnN subfamily. As to quaternary structure, homodimer.

The catalysed reaction is S-adenosyl-L-homocysteine + H2O = S-(5-deoxy-D-ribos-5-yl)-L-homocysteine + adenine. The enzyme catalyses S-methyl-5'-thioadenosine + H2O = 5-(methylsulfanyl)-D-ribose + adenine. It carries out the reaction 5'-deoxyadenosine + H2O = 5-deoxy-D-ribose + adenine. It functions in the pathway amino-acid biosynthesis; L-methionine biosynthesis via salvage pathway; S-methyl-5-thio-alpha-D-ribose 1-phosphate from S-methyl-5'-thioadenosine (hydrolase route): step 1/2. Functionally, catalyzes the irreversible cleavage of the glycosidic bond in both 5'-methylthioadenosine (MTA) and S-adenosylhomocysteine (SAH/AdoHcy) to adenine and the corresponding thioribose, 5'-methylthioribose and S-ribosylhomocysteine, respectively. Also cleaves 5'-deoxyadenosine, a toxic by-product of radical S-adenosylmethionine (SAM) enzymes, into 5-deoxyribose and adenine. Thus, is required for in vivo function of the radical SAM enzymes biotin synthase and lipoic acid synthase, that are inhibited by 5'-deoxyadenosine accumulation. The chain is 5'-methylthioadenosine/S-adenosylhomocysteine nucleosidase from Sodalis glossinidius (strain morsitans).